The following is a 273-amino-acid chain: Undecaprenyl-diphosphatase (273 aa).

8 consecutive transmembrane segments (helical) span residues 18–40, 45–65, 92–112, 114–134, 151–171, 189–209, 225–245, and 253–273; these read GLTEFLPVSSTGHMILVGSLLGF, AKTFEVIIQLGSILAVVVVFW, GHILLGMIPAVVLGLVFHEQI, AIFAPIYVMYALVVGGVLLLA, LTYLQAFLIGCFQCLALWPGF, YAASEFSFILAVPMMLGATVL, MFAIGFVTAFVVALLAIKFFL, and FVPFAIYRFILAVVVYWILIG.

It belongs to the UppP family.

The protein localises to the cell inner membrane. It carries out the reaction di-trans,octa-cis-undecaprenyl diphosphate + H2O = di-trans,octa-cis-undecaprenyl phosphate + phosphate + H(+). Catalyzes the dephosphorylation of undecaprenyl diphosphate (UPP). Confers resistance to bacitracin. The polypeptide is Undecaprenyl-diphosphatase (Sodalis glossinidius (strain morsitans)).